Here is a 972-residue protein sequence, read N- to C-terminus: uncharacterized protein (972 aa).

Positions 1-21 (MTNMILLSAVFLSLAILETHC) are cleaved as a signal peptide. Over 22–932 (ANHISTGIST…KELGEKLYHV (911 aa)) the chain is Extracellular. The interval 892–912 (EPTVTTTTESPPPPTTTTRQI) is disordered. The helical transmembrane segment at 933 to 953 (LFFMGVLTVSVAGGVIILSFI) threads the bilayer. The Cytoplasmic segment spans residues 954 to 972 (GCLIMRKMEDAPQKTKYSV).

The protein resides in the host membrane. This is an uncharacterized protein from Magallana gigas (Pacific oyster).